Consider the following 635-residue polypeptide: Sodium- and chloride-dependent creatine transporter 1 (635 aa).

Polar residues predominate over residues 1–11; sequence MANKSTENGIY. Residues 1 to 27 form a disordered region; it reads MANKSTENGIYSVSGEEKKGPLIAPGP. At 1 to 60 the chain is on the cytoplasmic side; that stretch reads MANKSTENGIYSVSGEEKKGPLIAPGPDGAPAKGDGPAALGAPGSLLAVPPRETWTRQMD. The helical transmembrane segment at 61–81 threads the bilayer; that stretch reads FIMSCVGFAVGLGNVWRFPYL. The Extracellular portion of the chain corresponds to 82–87; the sequence is CYKNGG. A helical transmembrane segment spans residues 88–108; it reads GVFLIPYILIALIGGIPIFFL. Topologically, residues 109–138 are cytoplasmic; the sequence is EISLGQFMKAGSINVWNICPLFKGLGYASM. The helical transmembrane segment at 139 to 159 threads the bilayer; it reads VIVFYCNTYYIMVLAWGFYYL. Residues 160-230 lie on the Extracellular side of the membrane; that stretch reads VKSFTTTLPW…LSEGLEVPGA (71 aa). Asparagine 192 and asparagine 197 each carry an N-linked (GlcNAc...) asparagine glycan. Residues 231–251 form a helical membrane-spanning segment; that stretch reads LNWEVTLCLLTCWVLVYFCVW. At 252–269 the chain is on the cytoplasmic side; that stretch reads KGVKSTGKIVYFTATFPY. A helical transmembrane segment spans residues 270–290; it reads VVLVVLLVRGVLLPGALDGII. At 291-304 the chain is on the extracellular side; the sequence is YYLKPDWSKLASPQ. Residues 305-325 traverse the membrane as a helical segment; that stretch reads VWIDAGTQIFFSYAIGLGALT. Over 326–341 the chain is Cytoplasmic; it reads ALGSYNRFNNNCYKDA. Residues 342–362 traverse the membrane as a helical segment; sequence IILALINSGTSFFAGFVVFSI. Residues 363-394 lie on the Extracellular side of the membrane; that stretch reads LGFMATEQGVHISKVAESGPGLAFIAYPRAVT. The helical transmembrane segment at 395–415 threads the bilayer; the sequence is LMPVAPLWAALFFFMLLLLGL. The Cytoplasmic portion of the chain corresponds to 416–444; the sequence is DSQFVGVEGFITGLLDLLPASYYFRFQRE. A helical membrane pass occupies residues 445–465; the sequence is ISVALCCTICFVIDLSMVTDG. Residues 466–479 are Extracellular-facing; it reads GMYVFQLFDYYSAS. The chain crosses the membrane as a helical span at residues 480–500; it reads GTTLLWQAFWECVVVAWVYGA. Over 501–520 the chain is Cytoplasmic; sequence DRFMDDVACMIGYRPCPWMK. Residues 521-541 form a helical membrane-spanning segment; that stretch reads WCWSFFTPLVCMGIFIFNVVY. Over 542–560 the chain is Extracellular; that stretch reads HEPLVYNNTYVYPWWGEAV. N-linked (GlcNAc...) asparagine glycosylation occurs at asparagine 548. The chain crosses the membrane as a helical span at residues 561–581; that stretch reads GWAFALSSMLCVPLHLLGCLL. Topologically, residues 582 to 635 are cytoplasmic; that stretch reads RAKGTMAERWQHLTQPIWGLHHLEYRAQDSDVRGLTTLTPVSESSKVVVVESVM. A phosphothreonine mark is found at threonine 617 and threonine 620. Residue serine 623 is modified to Phosphoserine.

It belongs to the sodium:neurotransmitter symporter (SNF) (TC 2.A.22) family. SLC6A8 subfamily. Post-translationally, glycosylated.

The protein localises to the cell membrane. It is found in the apical cell membrane. The catalysed reaction is creatine(out) + chloride(out) + 2 Na(+)(out) = creatine(in) + chloride(in) + 2 Na(+)(in). Its function is as follows. Creatine:sodium symporter which mediates the uptake of creatine. Plays an important role in supplying creatine to the brain via the blood-brain barrier. This Bos taurus (Bovine) protein is Sodium- and chloride-dependent creatine transporter 1 (SLC6A8).